Consider the following 299-residue polypeptide: 33 kDa chaperonin (299 aa).

Cystine bridges form between cysteine 234/cysteine 236 and cysteine 268/cysteine 271.

The protein belongs to the HSP33 family. Post-translationally, under oxidizing conditions two disulfide bonds are formed involving the reactive cysteines. Under reducing conditions zinc is bound to the reactive cysteines and the protein is inactive.

It is found in the cytoplasm. Redox regulated molecular chaperone. Protects both thermally unfolding and oxidatively damaged proteins from irreversible aggregation. Plays an important role in the bacterial defense system toward oxidative stress. The chain is 33 kDa chaperonin from Pseudomonas putida (strain ATCC 700007 / DSM 6899 / JCM 31910 / BCRC 17059 / LMG 24140 / F1).